Reading from the N-terminus, the 233-residue chain is Small ribosomal subunit protein uS7m (233 aa).

Residues 1 to 28 (MAAPTGKLLVHRIRAGLTCLTQVRWSRY) constitute a mitochondrion transit peptide.

Belongs to the universal ribosomal protein uS7 family. As to quaternary structure, component of the mitochondrial ribosome small subunit (28S) which comprises a 12S rRNA and about 30 distinct proteins.

It is found in the mitochondrion. This chain is Small ribosomal subunit protein uS7m (mrps7), found in Xenopus laevis (African clawed frog).